A 676-amino-acid chain; its full sequence is Solute carrier family 26 member 10 (676 aa).

Residues 1–24 (MSGPLASGTCSDPEEVSDLKSPLS) are disordered. Helical transmembrane passes span 101–121 (AVAG…FALL), 124–144 (VPPV…SLLG), 149–165 (LSTG…GSVV), 190–210 (VGAA…MFVL), 226–246 (ALTS…LLGL), 267–287 (ALSQ…VLLV), 300–320 (LLTP…LCFT), 353–373 (ILAD…SLAS), 398–418 (ISSL…SLLV), 426–446 (LAGL…RPFF), and 487–507 (IVTW…VGVV). The STAS domain occupies 539–660 (ESRKLLQVPG…VSVQDAAAHA (122 aa)).

This sequence belongs to the SLC26A/SulP transporter (TC 2.A.53) family.

It is found in the membrane. Functionally, chloride/bicarbonate exchanger. This chain is Solute carrier family 26 member 10 (Slc26a10), found in Mus musculus (Mouse).